Reading from the N-terminus, the 691-residue chain is MIMVRRRQRPAKEAASSSSGGASSGSGIPVDQALPLNVAGNLLEDQYFASPKRKDCRLMKVTQNGQLPEATMMAHNKDNKAGRTIGVPLATRSQTRTIENFFKANAAAKDSQKTIHTEEQLNLGNQELKLDDEELNGQIKLDDEVLKLADKQINENLPFADEVDAKAEQKLMDEELQQVVEELLFDGSSRASSNSPFYQHDMDVMQEIQQTPEIPHIKKVTEPLEGLGSLADFQTHRSALRDSHSSTHSSSTDNIFLQEPVLTLDIDRTPTKASSIKINRSFELAGAVFSSPPSVLNACLNGRFNQIVSLNGQKEALDLPHFDLDQHDSSSCDSGVACGLTANTESPAGQPRRRKPATPHRILCPSPIKTALKVTGGICKVGSADPLSPRKSPRKLPTTTAAVAACKSRRRLNQPKPQAPYQPQLQKPPSQQQQQQQDDIVVVLDDDDDEGDDEDDVRALIKAAEERENQNKAPATANSNKAGMKTMLKPAPVKSKTKSKGPTKGQPPLPLAATNGNREMTDFFPVRRSVRKTKTAVKEEWMRGLEQAVLEERCDGLQVRHFMGKGRGVVADRPFKRNEFVVEYVGDLISIGEAAEREKRYALDENAGCYMYYFKHKSQQYCIDATVDTGKLGRLINHSRAGNLMTKVVLIKQRPHLVLLAKDDIEPGEELTYDYGDRSKESLLHHPWLAF.

The segment at 1-29 (MIMVRRRQRPAKEAASSSSGGASSGSGIP) is disordered. Low complexity predominate over residues 14–27 (AASSSSGGASSGSG). A phosphoserine mark is found at Ser-195 and Ser-250. Residue Thr-252 is modified to Phosphothreonine. Residue Ser-281 is modified to Phosphoserine. 4 disordered regions span residues 341–363 (TANT…HRIL), 382–401 (GSAD…TTTA), 407–437 (KSRR…QQQQ), and 464–516 (AEER…ATNG). At Thr-344 the chain carries Phosphothreonine. 4 positions are modified to phosphoserine: Ser-346, Ser-383, Ser-388, and Ser-392. Composition is skewed to polar residues over residues 421 to 430 (YQPQLQKPPS) and 471 to 481 (NKAPATANSNK). The SET domain maps to 555 to 676 (DGLQVRHFMG…PGEELTYDYG (122 aa)). Residues 565–567 (KGR), Tyr-610, and 637–638 (NH) contribute to the S-adenosyl-L-methionine site.

The protein belongs to the class V-like SAM-binding methyltransferase superfamily. Histone-lysine methyltransferase family. PR/SET subfamily.

Its subcellular location is the nucleus. It is found in the chromosome. The enzyme catalyses L-lysyl(20)-[histone H4] + S-adenosyl-L-methionine = N(6)-methyl-L-lysyl(20)-[histone H4] + S-adenosyl-L-homocysteine + H(+). Functionally, histone methyltransferase that specifically monomethylates 'Lys-20' of histone H4. H4 'Lys-20' monomethylation is enriched during mitosis and represents a specific tag for epigenetic transcriptional repression. Mainly functions in euchromatin regions, thereby playing a central role in the silencing of euchromatic genes. Required for cell proliferation, possibly by contributing to the maintenance of proper higher-order structure of DNA and chromosome condensation during mitosis. The chain is Histone-lysine N-methyltransferase Set8 from Drosophila melanogaster (Fruit fly).